The chain runs to 336 residues: Dihydroorotate dehydrogenase (quinone) (336 aa).

FMN is bound by residues 62–66 (AGLDK) and T86. Residue K66 coordinates substrate. 111–115 (NRMGF) is a binding site for substrate. FMN contacts are provided by N139 and N172. N172 lines the substrate pocket. The active-site Nucleophile is the S175. N177 provides a ligand contact to substrate. FMN contacts are provided by K217 and T245. 246–247 (NT) contributes to the substrate binding site. FMN-binding positions include G268, G297, and 318-319 (YS).

This sequence belongs to the dihydroorotate dehydrogenase family. Type 2 subfamily. In terms of assembly, monomer. FMN is required as a cofactor.

It is found in the cell membrane. It catalyses the reaction (S)-dihydroorotate + a quinone = orotate + a quinol. It participates in pyrimidine metabolism; UMP biosynthesis via de novo pathway; orotate from (S)-dihydroorotate (quinone route): step 1/1. Functionally, catalyzes the conversion of dihydroorotate to orotate with quinone as electron acceptor. The protein is Dihydroorotate dehydrogenase (quinone) of Hamiltonella defensa subsp. Acyrthosiphon pisum (strain 5AT).